The primary structure comprises 166 residues: Biotin carboxyl carrier protein of acetyl-CoA carboxylase (166 aa).

Residues 61–70 (STASEASSPA) are compositionally biased toward polar residues. The disordered stretch occupies residues 61–82 (STASEASSPASVKDVPVEEQPQ). The region spanning 90–166 (GDIVESPLVG…EFGQGLVRIK (77 aa)) is the Biotinyl-binding domain. Position 132 is an N6-biotinyllysine (lysine 132).

In terms of assembly, homodimer.

Its pathway is lipid metabolism; fatty acid biosynthesis. This protein is a component of the acetyl coenzyme A carboxylase complex; first, biotin carboxylase catalyzes the carboxylation of the carrier protein and then the transcarboxylase transfers the carboxyl group to form malonyl-CoA. The chain is Biotin carboxyl carrier protein of acetyl-CoA carboxylase from Streptococcus pyogenes serotype M6 (strain ATCC BAA-946 / MGAS10394).